The chain runs to 584 residues: Cation channel sperm-associated protein 2 (584 aa).

Residues Met-1–Ser-106 are Cytoplasmic-facing. A helical transmembrane segment spans residues Ile-107–Leu-129. Topologically, residues Met-130 to Trp-138 are extracellular. A helical transmembrane segment spans residues Pro-139–Leu-164. Over Ala-165–Asn-173 the chain is Cytoplasmic. Residues Ala-174 to Ser-198 form a helical membrane-spanning segment. Topologically, residues Ala-199 to Ser-201 are extracellular. A helical transmembrane segment spans residues Val-202–Ala-220. Over Arg-221–Lys-237 the chain is Cytoplasmic. The helical transmembrane segment at Ser-238–Phe-260 threads the bilayer. Over Phe-261–Ser-279 the chain is Extracellular. Positions Asp-280–Phe-292 form an intramembrane region, helical; Pore-forming. Residues Thr-293 to Arg-312 are Extracellular-facing. The helical transmembrane segment at Val-313 to Val-339 threads the bilayer. Residues Thr-340–Lys-584 are Cytoplasmic-facing. Residues Ser-376–Lys-386 show a composition bias toward polar residues. Disordered regions lie at residues Ser-376–Thr-460 and Ala-480–Ala-510. Acidic residues-rich tracts occupy residues Asp-390–Ser-418 and Glu-426–Ser-443. 2 stretches are compositionally biased toward basic and acidic residues: residues Asp-444–Thr-460 and Ala-483–Ala-496.

Belongs to the cation channel sperm-associated (TC 1.A.1.19) family. Component of the CatSper complex or CatSpermasome composed of the core pore-forming members CATSPER1, CATSPER2, CATSPER3 and CATSPER4 as well as auxiliary members CATSPERB, CATSPERG, CATSPERD, CATSPERE, CATSPERZ, C2CD6/CATSPERT, SLCO6C1, TMEM249, TMEM262 and EFCAB9. HSPA1 may be an additional auxiliary complex member. The core complex members CATSPER1, CATSPER2, CATSPER3 and CATSPER4 form a heterotetrameric channel. The auxiliary CATSPERB, CATSPERG, CATSPERD and CATSPERE subunits form a pavilion-like structure over the pore which stabilizes the complex through interactions with CATSPER4, CATSPER3, CATSPER1 and CATSPER2 respectively. SLCO6C1 interacts with CATSPERE and TMEM262/CATSPERH interacts with CATSPERB, further stabilizing the complex. C2CD6/CATSPERT interacts at least with CATSPERD and is required for targeting the CatSper complex in the flagellar membrane. Interacts with Ca(v)3.3/CACNA1I, leading to suppression of T-type calcium channel activity.

Its subcellular location is the cell projection. It is found in the cilium. The protein resides in the flagellum membrane. The catalysed reaction is Ca(2+)(in) = Ca(2+)(out). Its activity is regulated as follows. Activated by intracellular alkalinization. In terms of biological role, pore-forming subunit of the CatSper complex, a sperm-specific voltage-gated calcium channel that plays a central role in sperm cell hyperactivation. Controls calcium entry to mediate the hyperactivated motility, a step needed for sperm motility which is essential late in the preparation of sperm for fertilization. This chain is Cation channel sperm-associated protein 2 (Catsper2), found in Rattus norvegicus (Rat).